Consider the following 318-residue polypeptide: CMRF35-like molecule 8 (318 aa).

The first 27 residues, 1–27 (MTQLASAVWLPTLLLLLLLFWLPGCVP), serve as a signal peptide directing secretion. Residues 28–129 (LHGPSTMSGS…FDGSLGFDKY (102 aa)) form the Ig-like V-type domain. Residues 28-185 (LHGPSTMSGS…HDYSQGLRLP (158 aa)) lie on the Extracellular side of the membrane. C46 and C113 are oxidised to a cystine. An N-linked (GlcNAc...) asparagine glycan is attached at N93. The span at 139 to 148 (SEDPVSSPGP) shows a compositional bias: low complexity. A disordered region spans residues 139 to 174 (SEDPVSSPGPTLETPVVSTSLPTKGPALGSNTEGHR). The helical transmembrane segment at 186–206 (ALLSVLALLLFLLVGTSLLAW) threads the bilayer. Residues 207–318 (RMFQKRLVKA…PRKGLSDLYL (112 aa)) lie on the Cytoplasmic side of the membrane. The span at 284–296 (QDSHANGDSLHQP) shows a compositional bias: polar residues. Positions 284 to 318 (QDSHANGDSLHQPQDQKAEYSEIQKPRKGLSDLYL) are disordered. The span at 297-308 (QDQKAEYSEIQK) shows a compositional bias: basic and acidic residues. Y303 bears the Phosphotyrosine mark.

This sequence belongs to the CD300 family. Upon tyrosine-phosphorylation, interacts with PTN6/SHP-1 and PTPN11/SHP-2 and INPP5D. In terms of processing, phosphorylated on tyrosine. N-glycosylated. As to expression, present on the surface of the majority of myeloid cells and a subset of B-cells. Present on the surface of NK cells after IL-12 stimulation.

Its subcellular location is the cell membrane. Its function is as follows. Inhibitory receptor which may contribute to the down-regulation of cytolytic activity in natural killer (NK) cells, and to the down-regulation of mast cell degranulation. Negatively regulates the Toll-like receptor (TLR) signaling mediated by MYD88 but not TRIF through activation of PTPN6. In Mus musculus (Mouse), this protein is CMRF35-like molecule 8 (Cd300a).